We begin with the raw amino-acid sequence, 376 residues long: Queuine tRNA-ribosyltransferase (376 aa).

Asp-93 acts as the Proton acceptor in catalysis. Substrate contacts are provided by residues 93–97 (DSGGF), Asp-147, Gln-190, and Gly-217. The interval 248-254 (GVGKPDD) is RNA binding. The active-site Nucleophile is the Asp-267. Positions 305, 307, 310, and 336 each coordinate Zn(2+).

This sequence belongs to the queuine tRNA-ribosyltransferase family. As to quaternary structure, homodimer. Within each dimer, one monomer is responsible for RNA recognition and catalysis, while the other monomer binds to the replacement base PreQ1. It depends on Zn(2+) as a cofactor.

It catalyses the reaction 7-aminomethyl-7-carbaguanine + guanosine(34) in tRNA = 7-aminomethyl-7-carbaguanosine(34) in tRNA + guanine. The protein operates within tRNA modification; tRNA-queuosine biosynthesis. Catalyzes the base-exchange of a guanine (G) residue with the queuine precursor 7-aminomethyl-7-deazaguanine (PreQ1) at position 34 (anticodon wobble position) in tRNAs with GU(N) anticodons (tRNA-Asp, -Asn, -His and -Tyr). Catalysis occurs through a double-displacement mechanism. The nucleophile active site attacks the C1' of nucleotide 34 to detach the guanine base from the RNA, forming a covalent enzyme-RNA intermediate. The proton acceptor active site deprotonates the incoming PreQ1, allowing a nucleophilic attack on the C1' of the ribose to form the product. After dissociation, two additional enzymatic reactions on the tRNA convert PreQ1 to queuine (Q), resulting in the hypermodified nucleoside queuosine (7-(((4,5-cis-dihydroxy-2-cyclopenten-1-yl)amino)methyl)-7-deazaguanosine). This is Queuine tRNA-ribosyltransferase from Cereibacter sphaeroides (strain ATCC 17029 / ATH 2.4.9) (Rhodobacter sphaeroides).